Consider the following 255-residue polypeptide: 5-oxoprolinase subunit A (255 aa).

This sequence belongs to the LamB/PxpA family. In terms of assembly, forms a complex composed of PxpA, PxpB and PxpC.

The enzyme catalyses 5-oxo-L-proline + ATP + 2 H2O = L-glutamate + ADP + phosphate + H(+). Catalyzes the cleavage of 5-oxoproline to form L-glutamate coupled to the hydrolysis of ATP to ADP and inorganic phosphate. The sequence is that of 5-oxoprolinase subunit A from Rhodopseudomonas palustris (strain BisA53).